Here is a 240-residue protein sequence, read N- to C-terminus: Probable transcriptional regulatory protein Adeh_2184 (240 aa).

The protein belongs to the TACO1 family.

The protein localises to the cytoplasm. The polypeptide is Probable transcriptional regulatory protein Adeh_2184 (Anaeromyxobacter dehalogenans (strain 2CP-C)).